A 196-amino-acid polypeptide reads, in one-letter code: Agamous-like MADS-box protein AGL27 (196 aa).

The 61-residue stretch at 1 to 61 (MGRRKIEIKR…GKLYDSSSGD (61 aa)) folds into the MADS-box domain. One can recognise a K-box domain in the interval 80 to 170 (ALDLEEKIQN…ASQMGKNTLL (91 aa)). Residues 175 to 196 (ERGMFPGSSSGNKIPETLPLLN) are disordered.

Interacts with AGL39, AGL97 and AGL74. In terms of tissue distribution, expressed in most plant tissues, embryo, seedlings, roots, leaves, stems, inflorescence, pollen, siliques and flowers.

The protein localises to the nucleus. Functionally, probable transcription factor involved in the negative regulation of flowering time in both long and short days, probably through the photoperiodic and vernalization pathways. Prevents premature flowering. This Arabidopsis thaliana (Mouse-ear cress) protein is Agamous-like MADS-box protein AGL27 (AGL27).